A 592-amino-acid polypeptide reads, in one-letter code: Alanine aminotransferase, mitochondrial (592 aa).

The transit peptide at 1-64 directs the protein to the mitochondrion; sequence MLSLSAKNHF…RKVRPVLQRH (64 aa). Position 77 is a phosphoserine (S77). Residues A258, S259, Y284, N340, and S409 each contribute to the pyridoxal 5'-phosphate site. K412 bears the N6-(pyridoxal phosphate)lysine mark. R421 is a pyridoxal 5'-phosphate binding site.

It belongs to the class-I pyridoxal-phosphate-dependent aminotransferase family. Alanine aminotransferase subfamily. In terms of assembly, homodimer. Pyridoxal 5'-phosphate is required as a cofactor.

It is found in the mitochondrion matrix. The catalysed reaction is L-alanine + 2-oxoglutarate = pyruvate + L-glutamate. It functions in the pathway amino-acid degradation; L-alanine degradation via transaminase pathway; pyruvate from L-alanine: step 1/1. Functionally, alanine aminotransferase involved in both alanine biosynthesis and utilization. Under respiratory conditions, constitutes the sole pathway for alanine biosynthesis and catabolism. Under fermentative conditions, it plays a catabolic role and alanine is mainly synthesized through an alternative pathway. The polypeptide is Alanine aminotransferase, mitochondrial (ALT1) (Saccharomyces cerevisiae (strain ATCC 204508 / S288c) (Baker's yeast)).